Consider the following 202-residue polypeptide: Orotate phosphoribosyltransferase (202 aa).

5-phospho-alpha-D-ribose 1-diphosphate-binding positions include Lys93 and 113 to 121 (EDIITTGGS). Orotate is bound by residues Thr117 and Arg145.

This sequence belongs to the purine/pyrimidine phosphoribosyltransferase family. PyrE subfamily. Homodimer. Mg(2+) serves as cofactor.

It carries out the reaction orotidine 5'-phosphate + diphosphate = orotate + 5-phospho-alpha-D-ribose 1-diphosphate. It participates in pyrimidine metabolism; UMP biosynthesis via de novo pathway; UMP from orotate: step 1/2. Functionally, catalyzes the transfer of a ribosyl phosphate group from 5-phosphoribose 1-diphosphate to orotate, leading to the formation of orotidine monophosphate (OMP). This chain is Orotate phosphoribosyltransferase, found in Campylobacter concisus (strain 13826).